We begin with the raw amino-acid sequence, 742 residues long: Photosystem I P700 chlorophyll a apoprotein A2 (742 aa).

8 helical membrane-spanning segments follow: residues 46–69 (LFSTHFGHLAIIALWVAGNLFHIA), 135–158 (LFQASIFMSILACWTLFAGWLHLQ), 175–199 (LNHHLAVLFGFSSIAWTGHLVHVAI), 273–291 (IAHHHIAIGTVFIIAGHMY), 336–359 (LHFQLGLALAALGVATSLVAQHMG), 375–401 (SALYTHHQYIAMFLMVGAFAHGAIFFV), 423–445 (ALISHLSWVTMILGFHTLGIYVH), and 525–543 (FLVHHAIALGLHTTALILI). The [4Fe-4S] cluster site is built by cysteine 567 and cysteine 576. 2 helical membrane passes run 583 to 604 (AMYLAMFWALNLIAWVTFYWHW) and 651 to 673 (LSVWAWMFLFGHLVWATGFMFLI). The divinyl chlorophyll a site is built by histidine 662, methionine 670, and tyrosine 678. A phylloquinone-binding site is contributed by tryptophan 679. A helical membrane pass occupies residues 715 to 735 (LVGLAHFTIGNILTFGAFVIA).

This sequence belongs to the PsaA/PsaB family. The PsaA/B heterodimer binds the P700 divinyl chlorophyll special pair and subsequent electron acceptors. PSI consists of a core antenna complex that captures photons, and an electron transfer chain that converts photonic excitation into a charge separation. The cyanobacterial PSI reaction center is composed of one copy each of PsaA,B,C,D,E,F,I,J,K,L,M and X, and forms trimeric complexes. Requires PSI electron transfer chain: 5 divinyl chlorophyll a, 1 divinyl chlorophyll a', 2 phylloquinones and 3 4Fe-4S clusters. PSI core antenna: 90 divinyl chlorophyll a, 22 carotenoids, 3 phospholipids and 1 galactolipid. P700 is a divinyl chlorophyll a/divinyl chlorophyll a' dimer, A0 is one or more divinyl chlorophyll a, A1 is one or both phylloquinones and FX is a shared 4Fe-4S iron-sulfur center. as cofactor.

It localises to the cellular thylakoid membrane. The enzyme catalyses reduced [plastocyanin] + hnu + oxidized [2Fe-2S]-[ferredoxin] = oxidized [plastocyanin] + reduced [2Fe-2S]-[ferredoxin]. Its function is as follows. PsaA and PsaB bind P700, the primary electron donor of photosystem I (PSI), as well as the electron acceptors A0, A1 and FX. PSI is a plastocyanin/cytochrome c6-ferredoxin oxidoreductase, converting photonic excitation into a charge separation, which transfers an electron from the donor P700 chlorophyll pair to the spectroscopically characterized acceptors A0, A1, FX, FA and FB in turn. Oxidized P700 is reduced on the lumenal side of the thylakoid membrane by plastocyanin or cytochrome c6. This is Photosystem I P700 chlorophyll a apoprotein A2 from Prochlorococcus marinus subsp. pastoris (strain CCMP1986 / NIES-2087 / MED4).